The primary structure comprises 876 residues: Translation initiation factor IF-2 (876 aa).

In terms of domain architecture, tr-type G spans 378–547; it reads TRPPIITIMG…LTQSEMLELK (170 aa). The interval 387–394 is G1; that stretch reads GHVDHGKT. Residue 387 to 394 participates in GTP binding; that stretch reads GHVDHGKT. Positions 412 to 416 are G2; sequence RITQH. A G3 region spans residues 433–436; sequence DTPG. Residues 433–437 and 487–490 each bind GTP; these read DTPGH and NKID. The tract at residues 487-490 is G4; that stretch reads NKID. The tract at residues 523 to 525 is G5; sequence SAK.

Belongs to the TRAFAC class translation factor GTPase superfamily. Classic translation factor GTPase family. IF-2 subfamily.

It localises to the cytoplasm. In terms of biological role, one of the essential components for the initiation of protein synthesis. Protects formylmethionyl-tRNA from spontaneous hydrolysis and promotes its binding to the 30S ribosomal subunits. Also involved in the hydrolysis of GTP during the formation of the 70S ribosomal complex. In Buchnera aphidicola subsp. Baizongia pistaciae (strain Bp), this protein is Translation initiation factor IF-2.